We begin with the raw amino-acid sequence, 938 residues long: Scm-like with four MBT domains protein 2 (938 aa).

Residues 1–32 (MERYLPVSKKRNSSSSLEKITGSANGNGTLYS) form a disordered region. The span at 13-30 (SSSSLEKITGSANGNGTL) shows a compositional bias: polar residues. 4 MBT repeats span residues 43–143 (FSWG…LRPP), 151–255 (SDWT…MDPP), 265–371 (FEWK…LAPP), and 379–475 (FNWV…LTTP). The interval 742–836 (PEGIPESLPE…TVPTTASSNN (95 aa)) is disordered. Basic and acidic residues-rich tracts occupy residues 765-777 (TEQE…DTAR) and 809-822 (RNSE…VERA). Positions 868 to 931 (WSVTDVVRFI…CHQIERVKVA (64 aa)) constitute an SAM domain.

As to quaternary structure, interacts with YY1. Interacts with methylated histones H3K9me2 and H4K20me2. Expressed in testis and, at much lower levels, in ovary.

It localises to the nucleus. Transcriptional repressor of HOXB13 gene. In Mus musculus (Mouse), this protein is Scm-like with four MBT domains protein 2 (Sfmbt2).